The sequence spans 614 residues: High-affinity choline transporter 1 (614 aa).

The chain crosses the membrane as a helical span at residues 6–26 (GVVSIVLFYLLILVVGIWAGR). The Cytoplasmic segment spans residues 27-44 (KKQSGNDSEEEVMLAGRS). Residues 45–65 (IGLFVGIFTMTATWVGGGYIN) traverse the membrane as a helical segment. The Extracellular portion of the chain corresponds to 66 to 75 (GTAEAIYTSG). The helical transmembrane segment at 76-96 (LVWCQAPFGYALSLVFGGIFF) threads the bilayer. The Cytoplasmic segment spans residues 97–119 (ANPMRKQGYITMLDPLQDSFGER). Residues 120 to 140 (MGGLLFLPALCGEVFWAAGIL) form a helical membrane-spanning segment. The Extracellular segment spans residues 141-158 (AALGATLSVIIDMDHRTS). Residues 159–179 (VILSSCIAIFYTLFGGLYSVA) form a helical membrane-spanning segment. At 180 to 185 (YTDVIQ) the chain is on the cytoplasmic side. A helical membrane pass occupies residues 186–206 (LFCIFIGLWMCIPFAWSNEHV). Topologically, residues 207 to 225 (GSLSDLEVDWIGHVEPKKH) are extracellular. A helical membrane pass occupies residues 226–246 (WLYIDYGLLLVFGGIPWQVYF). Topologically, residues 247 to 262 (QRVLSSKTAGRAQLLS) are cytoplasmic. The chain crosses the membrane as a helical span at residues 263–283 (YVAAAGCILMAIPPVLIGAIA). The Extracellular portion of the chain corresponds to 284-305 (KATPWNETDYKGPYPLTVDETS). Asparagine 289 is a glycosylation site (N-linked (GlcNAc...) asparagine). The helical transmembrane segment at 306–326 (MILPMVLQYLTPDFVSFFGLG) threads the bilayer. The Cytoplasmic portion of the chain corresponds to 327–364 (AVSAAVMSSADSSVLSAASMFARNVYKLIFRQKASEME). The helical transmembrane segment at 365-385 (IIWVMRVAIIVVGILATIMAL) threads the bilayer. Topologically, residues 386–394 (TIPSIYGLW) are extracellular. The chain crosses the membrane as a helical span at residues 395–415 (SMCSDLVYVILFPQLLMVVHF). At 416-424 (KKHCNTYGS) the chain is on the cytoplasmic side. Residues 425 to 445 (LSAYIVALAIRLSGGEAILGL) form a helical membrane-spanning segment. Residues 446–467 (APLIKYPGYDEETKEQMFPFRT) lie on the Extracellular side of the membrane. The chain crosses the membrane as a helical span at residues 468 to 488 (MAMLLSLVTLISVSWWTKMMF). At 489–614 (ESGKLPPSYD…PTAEQDNTAF (126 aa)) the chain is on the cytoplasmic side. A disordered region spans residues 583–614 (ATGVKPSGGGGGHLQSQSGMAMPTAEQDNTAF).

It belongs to the sodium:solute symporter (SSF) (TC 2.A.21) family.

Its subcellular location is the membrane. Imports choline from the extracellular space to the neuron with high affinity. Rate-limiting step in acetylcholine synthesis. Sodium ion and chloride ion dependent. This chain is High-affinity choline transporter 1, found in Drosophila melanogaster (Fruit fly).